Here is a 427-residue protein sequence, read N- to C-terminus: Glutamate-1-semialdehyde 2,1-aminomutase (427 aa).

At lysine 264 the chain carries N6-(pyridoxal phosphate)lysine.

This sequence belongs to the class-III pyridoxal-phosphate-dependent aminotransferase family. HemL subfamily. As to quaternary structure, homodimer. The cofactor is pyridoxal 5'-phosphate.

The protein resides in the cytoplasm. It carries out the reaction (S)-4-amino-5-oxopentanoate = 5-aminolevulinate. The protein operates within porphyrin-containing compound metabolism; protoporphyrin-IX biosynthesis; 5-aminolevulinate from L-glutamyl-tRNA(Glu): step 2/2. The sequence is that of Glutamate-1-semialdehyde 2,1-aminomutase from Clostridium botulinum (strain Alaska E43 / Type E3).